The following is a 24-amino-acid chain: Ascaphin-2 (24 aa).

As to expression, expressed by the skin glands.

It localises to the secreted. Antimicrobial peptide that shows higher potency against Gram-negative bacteria than against Gram-positive bacteria. Has a very week hemolytic activity. The polypeptide is Ascaphin-2 (Ascaphus truei (Coastal tailed frog)).